The primary structure comprises 313 residues: Glutathione S-transferase omega-like 2 (313 aa).

Catalysis depends on C49, which acts as the Nucleophile. The 129-residue stretch at 161 to 289 (PSSLRTKIDE…TDFKHIKCHY (129 aa)) folds into the GST C-terminal domain.

The protein belongs to the GST superfamily. Omega family.

Its subcellular location is the cytoplasm. It localises to the nucleus. It is found in the golgi apparatus. The enzyme catalyses RX + glutathione = an S-substituted glutathione + a halide anion + H(+). It catalyses the reaction L-dehydroascorbate + 2 glutathione = glutathione disulfide + L-ascorbate. Its function is as follows. Active as '1-Cys' thiol transferase against beta-hydroxyethyl disulfide (HED), as dehydroascorbate reductase and as dimethylarsinic acid reductase, while not active against the standard GST substrate 1-chloro-2,4-dinitrobenzene (CDNB). May be involved in cell wall organization and biogenesis. In Schizosaccharomyces pombe (strain 972 / ATCC 24843) (Fission yeast), this protein is Glutathione S-transferase omega-like 2 (gto2).